Reading from the N-terminus, the 343-residue chain is Histone H1.8 (343 aa).

Residues 1-32 (MAPGSIASSDTSSSTSSSSTSSASSASAEGSS) show a composition bias toward low complexity. Disordered stretches follow at residues 1–50 (MAPG…VRAP) and 122–343 (ATGS…EAEG). The H15 domain occupies 52–130 (RHPPVLRMVL…GATGSFKLVP (79 aa)). A compositionally biased stretch (basic residues) spans 132 to 142 (DKRKIPPRKTA). 3 stretches are compositionally biased toward basic and acidic residues: residues 150–183 (EGKD…ERAA), 199–219 (QTKD…RPDK), and 235–247 (KVKE…ADTK). Residues 161-176 (KKDPANTVEVKKGSRK) carry the Nuclear localization signal motif. The span at 253–265 (QPGSQSSKSTVTK) shows a compositional bias: polar residues.

The protein belongs to the histone H1/H5 family. Oocyte (at protein level).

It localises to the cytoplasm. Its subcellular location is the nucleus. It is found in the chromosome. Its function is as follows. May play a key role in the control of gene expression during oogenesis and early embryogenesis, presumably through the perturbation of chromatin structure. Essential for meiotic maturation of germinal vesicle-stage oocytes. The somatic type linker histone H1c is rapidly replaced by H1oo in a donor nucleus transplanted into an oocyte. The greater mobility of H1oo as compared to H1c may contribute to this rapid replacement and increased instability of the embryonic chromatin structure. The rapid replacement of H1c with H1oo may play an important role in nuclear remodeling. This chain is Histone H1.8, found in Bos taurus (Bovine).